Reading from the N-terminus, the 340-residue chain is Phosphate acyltransferase (340 aa).

The protein belongs to the PlsX family. As to quaternary structure, homodimer. Probably interacts with PlsY.

The protein localises to the cytoplasm. It catalyses the reaction a fatty acyl-[ACP] + phosphate = an acyl phosphate + holo-[ACP]. The protein operates within lipid metabolism; phospholipid metabolism. In terms of biological role, catalyzes the reversible formation of acyl-phosphate (acyl-PO(4)) from acyl-[acyl-carrier-protein] (acyl-ACP). This enzyme utilizes acyl-ACP as fatty acyl donor, but not acyl-CoA. This is Phosphate acyltransferase from Pseudomonas syringae pv. syringae (strain B728a).